The chain runs to 505 residues: MITLTGHTLTIEEMKRLLLEGEGVTACPTSMQKVAECREVVEKIVENGKVVYGITTGFGKFSDVLIQKDDVKALQHNLIQSHACGIGDPFPEEVSRGMLILRANTMLKGVSGVRPLVVNMLLEFVNRKIHPVVPQQGSLGASGDLAPLSHLALILLGEGEVFYKGKRVHAMVALTEEGLEPIELEAKEGLALINGTQAMTAQGVLSYIEAEATAYQAELIASMTIEGLQGIIDAFDENVHKARGYKEQVEVASRIRDILHDSKLTTKQGELRVQDAYSLRCIPQVHGASWQVLNYVKEKLEIEMNAATDNPLIFDGGEKVISGGNFHGQPIAFAMDFLKVGMAELANISERRIERLVNPQLNDLPPFLSPEPGLQSGAMIMQYAAASLVSENKTLAHPASVDSIPSSANQEDHVSMGTIASRHAHQIIQNVRRVLSIEMICAMQAAEYRGIENMSTVTKSFYHQGRQQVPSITNDRIFSTDIENITHWLKTNYSIKERLDVNAAL.

The 5-imidazolinone (Ala-Gly) cross-link spans 141-143 (ASG). A 2,3-didehydroalanine (Ser) modification is found at S142.

This sequence belongs to the PAL/histidase family. Post-translationally, contains an active site 4-methylidene-imidazol-5-one (MIO), which is formed autocatalytically by cyclization and dehydration of residues Ala-Ser-Gly.

It localises to the cytoplasm. It catalyses the reaction L-histidine = trans-urocanate + NH4(+). It functions in the pathway amino-acid degradation; L-histidine degradation into L-glutamate; N-formimidoyl-L-glutamate from L-histidine: step 1/3. In Bacillus anthracis, this protein is Histidine ammonia-lyase.